We begin with the raw amino-acid sequence, 293 residues long: SAGA-associated factor 29 (293 aa).

Positions Leu-3–Glu-86 form a coiled coil. One can recognise an SGF29 C-terminal domain in the interval Gly-152–Lys-293. Histone H3K4me3 N-terminus binding regions lie at residues Asp-194–Asp-196 and Gln-240–Cys-243. The segment at Phe-264–Asp-266 is histone H3K4me3 binding. The residue at position 288 (Lys-288) is an N6-acetyllysine.

The protein belongs to the SGF29 family. As to quaternary structure, interacts with dimethylated and trimethylated 'Lys-4' of histone H3 (H3K4me2 and H3K4me3), with a preference for the trimethylated form (H3K4me3). Component of some SAGA-type complexes. Component of the ADA2A-containing complex (ATAC), composed of KAT14, KAT2A, TADA2L, TADA3L, ZZ3, MBIP, WDR5, YEATS2, CCDC101 and DR1. Interacts with (methylated) CGAS. Interacts with TADA3L, GCN5L2, SUPT3H and MYC.

It localises to the nucleus. Functionally, chromatin reader component of some histone acetyltransferase (HAT) SAGA-type complexes like the TFTC-HAT, ATAC or STAGA complexes. SGF29 specifically recognizes and binds methylated 'Lys-4' of histone H3 (H3K4me), with a preference for trimethylated form (H3K4me3). In the SAGA-type complexes, SGF29 is required to recruit complexes to H3K4me. Involved in the response to endoplasmic reticulum (ER) stress by recruiting the SAGA complex to H3K4me, thereby promoting histone H3 acetylation and cell survival. Also binds non-histone proteins that are methylated on Lys residues: specifically recognizes and binds CGAS monomethylated on 'Lys-491'. This is SAGA-associated factor 29 from Mus musculus (Mouse).